The following is a 297-amino-acid chain: Homoserine kinase (297 aa).

ATP is bound at residue 82–92 (PLTRGLGSSAS).

This sequence belongs to the GHMP kinase family. Homoserine kinase subfamily.

It is found in the cytoplasm. It carries out the reaction L-homoserine + ATP = O-phospho-L-homoserine + ADP + H(+). Its pathway is amino-acid biosynthesis; L-threonine biosynthesis; L-threonine from L-aspartate: step 4/5. Its function is as follows. Catalyzes the ATP-dependent phosphorylation of L-homoserine to L-homoserine phosphate. The sequence is that of Homoserine kinase from Bacillus thuringiensis (strain Al Hakam).